Consider the following 343-residue polypeptide: Uroporphyrinogen decarboxylase (343 aa).

Residues 23 to 27 (RQAGR), Asp73, Tyr149, Thr204, and His320 each bind substrate.

This sequence belongs to the uroporphyrinogen decarboxylase family. Homodimer.

It localises to the cytoplasm. It carries out the reaction uroporphyrinogen III + 4 H(+) = coproporphyrinogen III + 4 CO2. It functions in the pathway porphyrin-containing compound metabolism; protoporphyrin-IX biosynthesis; coproporphyrinogen-III from 5-aminolevulinate: step 4/4. In terms of biological role, catalyzes the decarboxylation of four acetate groups of uroporphyrinogen-III to yield coproporphyrinogen-III. The protein is Uroporphyrinogen decarboxylase of Bradyrhizobium sp. (strain BTAi1 / ATCC BAA-1182).